The chain runs to 360 residues: MLFLLSELSGTLTPLNVFRYITFRTGGALFTAGFFVFWFGPWIISLLRLRQGKGQPIREDGPATHLTKRGTPTMGGLMILAGAVVSILLWTNPRNHYVWVTLAVTLGFGAIGFYDDYLKVTKQSHKGFSGRFRLLLEFAIAGAACLLISIYSPAGLQNQLAFPVFKDALLNLGWFWVPFAAFVIVGAGNAVNITDGLDGLAIVPVMIACGTFGVIAYLVGNSFTAGYLQVNYVRDTGELAVVCGAVIGAGLGFLWFNAPPAQIFMGDTGSLALGGLLGAIAVAAKHEIVLAIVGGLFVLEIMSVIIQVASFKLTGKRVFRMAPIHHHFEQKGWKEPQVVIRFWIIAVILALVGLATLKLR.

A run of 10 helical transmembrane segments spans residues 27–47 (GALFTAGFFVFWFGPWIISLL), 70–90 (GTPTMGGLMILAGAVVSILLW), 98–118 (VWVTLAVTLGFGAIGFYDDYL), 134–154 (LLLEFAIAGAACLLISIYSPA), 168–188 (ALLNLGWFWVPFAAFVIVGAG), 199–219 (GLAIVPVMIACGTFGVIAYLV), 239–259 (LAVVCGAVIGAGLGFLWFNAP), 263–283 (IFMGDTGSLALGGLLGAIAVA), 288–308 (IVLAIVGGLFVLEIMSVIIQV), and 337–357 (QVVIRFWIIAVILALVGLATL).

This sequence belongs to the glycosyltransferase 4 family. MraY subfamily. Mg(2+) is required as a cofactor.

It localises to the cell inner membrane. The catalysed reaction is UDP-N-acetyl-alpha-D-muramoyl-L-alanyl-gamma-D-glutamyl-meso-2,6-diaminopimeloyl-D-alanyl-D-alanine + di-trans,octa-cis-undecaprenyl phosphate = di-trans,octa-cis-undecaprenyl diphospho-N-acetyl-alpha-D-muramoyl-L-alanyl-D-glutamyl-meso-2,6-diaminopimeloyl-D-alanyl-D-alanine + UMP. Its pathway is cell wall biogenesis; peptidoglycan biosynthesis. Catalyzes the initial step of the lipid cycle reactions in the biosynthesis of the cell wall peptidoglycan: transfers peptidoglycan precursor phospho-MurNAc-pentapeptide from UDP-MurNAc-pentapeptide onto the lipid carrier undecaprenyl phosphate, yielding undecaprenyl-pyrophosphoryl-MurNAc-pentapeptide, known as lipid I. This chain is Phospho-N-acetylmuramoyl-pentapeptide-transferase, found in Methylorubrum populi (strain ATCC BAA-705 / NCIMB 13946 / BJ001) (Methylobacterium populi).